Consider the following 127-residue polypeptide: Fluoride-specific ion channel FluC (127 aa).

The next 4 helical transmembrane spans lie at leucine 8–phenylalanine 28, proline 37–isoleucine 57, tryptophan 68–tyrosine 88, and isoleucine 100–glycine 120. Na(+)-binding residues include glycine 78 and threonine 81.

This sequence belongs to the fluoride channel Fluc/FEX (TC 1.A.43) family.

It localises to the cell inner membrane. The catalysed reaction is fluoride(in) = fluoride(out). Na(+) is not transported, but it plays an essential structural role and its presence is essential for fluoride channel function. Fluoride-specific ion channel. Important for reducing fluoride concentration in the cell, thus reducing its toxicity. This is Fluoride-specific ion channel FluC from Leptospira interrogans serogroup Icterohaemorrhagiae serovar Lai (strain 56601).